Consider the following 654-residue polypeptide: ATP-dependent rRNA helicase spb-4 (654 aa).

Positions 17–45 (WDALTPPLAQWILDYLSSMGFTQPTPVQK) match the Q motif motif. A Helicase ATP-binding domain is found at 48-249 (LELFRGNKDV…TVGLLYPHKI (202 aa)). ATP is bound at residue 61 to 68 (AVTGSGKT). The DEAD box signature appears at 197–200 (DEAD). The Helicase C-terminal domain maps to 286 to 444 (AIVQLLEKLE…VTPDEVERVS (159 aa)). The stretch at 531–631 (REKKRQEELA…EERAAALAAN (101 aa)) forms a coiled coil. The span at 542–577 (WKEEKAKRAQEENTGDKRKKNEAWSGKAEQEETKLQ) shows a compositional bias: basic and acidic residues. Positions 542-654 (WKEEKAKRAQ…SDEEFGGFDD (113 aa)) are disordered. Basic residues predominate over residues 578-588 (RREKKRRKREA). Basic and acidic residues predominate over residues 589-625 (KKFSEMTEKEKEEHLKLEQMIEEVRKRNEAKAAEERA). The span at 644-654 (DSDEEFGGFDD) shows a compositional bias: acidic residues.

Belongs to the DEAD box helicase family. DDX55/SPB4 subfamily. As to quaternary structure, component of pre-60S ribosomal complexes.

The protein resides in the nucleus. The protein localises to the nucleolus. It carries out the reaction ATP + H2O = ADP + phosphate + H(+). In terms of biological role, ATP-binding RNA helicase involved in the biogenesis of 60S ribosomal subunits. Binds 90S pre-ribosomal particles and dissociates from pre-60S ribosomal particles after processing of 27SB pre-rRNA. Required for the normal formation of 18S rRNA through the processing of pre-rRNAs at sites A0, A1 and A2, and the normal formation of 25S and 5.8S rRNAs through the processing of pre-rRNAs at sites C1 and C2. This is ATP-dependent rRNA helicase spb-4 from Neurospora crassa (strain ATCC 24698 / 74-OR23-1A / CBS 708.71 / DSM 1257 / FGSC 987).